We begin with the raw amino-acid sequence, 125 residues long: Calcitonin receptor-stimulating peptide 2 (125 aa).

A signal peptide spans 1–25 (MGFWKFLPFLVLSFLVVYQAGMFQA). Positions 26–77 (APFRSALENDFDPAILTEKEMCLLLAAVMNDYVQMKTSELKQEAEHFHITAQ) are excised as a propeptide. Residues Cys81 and Cys86 are joined by a disulfide bond.

It belongs to the calcitonin family.

It localises to the secreted. The polypeptide is Calcitonin receptor-stimulating peptide 2 (CRSP2) (Capra hircus (Goat)).